The chain runs to 156 residues: MSLELCNSTRQAIPNKRLLQAIRMVVQGEGYEIATITGVYCGNRMSQRINRDYLNHDYPTDTITFCYSEGKAIEGEFYISLDVIRCNARHFNVTFEEELLRVTIHSALHLTGMNDYLPEERVAMQAKEDYYLQLLKTQKSISPQKSTDNAIFSCNS.

Residues H105, H109, and D115 each contribute to the Zn(2+) site.

It belongs to the endoribonuclease YbeY family. Requires Zn(2+) as cofactor.

The protein resides in the cytoplasm. Single strand-specific metallo-endoribonuclease involved in late-stage 70S ribosome quality control and in maturation of the 3' terminus of the 16S rRNA. This is Endoribonuclease YbeY from Chlorobium chlorochromatii (strain CaD3).